The following is a 312-amino-acid chain: tRNA uridine(34) hydroxylase (312 aa).

Residues 130–225 (RGDEVVFFDG…YGEKFGNQGL (96 aa)) form the Rhodanese domain. C185 (cysteine persulfide intermediate) is an active-site residue.

The protein belongs to the TrhO family.

It carries out the reaction uridine(34) in tRNA + AH2 + O2 = 5-hydroxyuridine(34) in tRNA + A + H2O. In terms of biological role, catalyzes oxygen-dependent 5-hydroxyuridine (ho5U) modification at position 34 in tRNAs. The chain is tRNA uridine(34) hydroxylase from Corynebacterium efficiens (strain DSM 44549 / YS-314 / AJ 12310 / JCM 11189 / NBRC 100395).